The sequence spans 67 residues: MFGLGGQELVLILLIVLLLFGAQKLPELAKGLGKGIKEFKKAQNEIEEEFNKATDDSSSKEKKETKA.

Residues 1-21 (MFGLGGQELVLILLIVLLLFG) traverse the membrane as a helical segment.

Belongs to the TatA/E family. As to quaternary structure, forms a complex with TatC.

The protein resides in the cell inner membrane. Its function is as follows. Part of the twin-arginine translocation (Tat) system that transports large folded proteins containing a characteristic twin-arginine motif in their signal peptide across membranes. TatA could form the protein-conducting channel of the Tat system. This Chlorobaculum tepidum (strain ATCC 49652 / DSM 12025 / NBRC 103806 / TLS) (Chlorobium tepidum) protein is Sec-independent protein translocase protein TatA.